A 434-amino-acid polypeptide reads, in one-letter code: Cysteine--tRNA ligase (434 aa).

Cysteine 28 is a binding site for Zn(2+). Positions 30-40 (PTVYDDIHIGN) match the 'HIGH' region motif. Positions 207, 232, and 236 each coordinate Zn(2+). Positions 264-268 (KMSKS) match the 'KMSKS' region motif. Lysine 267 serves as a coordination point for ATP.

This sequence belongs to the class-I aminoacyl-tRNA synthetase family. In terms of assembly, monomer. It depends on Zn(2+) as a cofactor.

It localises to the cytoplasm. It carries out the reaction tRNA(Cys) + L-cysteine + ATP = L-cysteinyl-tRNA(Cys) + AMP + diphosphate. The polypeptide is Cysteine--tRNA ligase (Acholeplasma laidlawii (strain PG-8A)).